The chain runs to 775 residues: Coiled-coil domain-containing protein R3HCC1L (775 aa).

Composition is skewed to basic and acidic residues over residues 1-16 (MQQE…KRPD) and 65-112 (ESQR…KGAE). Disordered regions lie at residues 1–127 (MQQE…HRAP) and 235–262 (LSSD…DISV). An EJC-binding motif; may mediate interaction with the EJC region spans residues 7–27 (RCRVRTKRPDMALYVPKARRG). Residues 235 to 247 (LSSDSETAPSSLE) show a composition bias toward polar residues. Ser-671 bears the Phosphoserine mark. Thr-695 is subject to Phosphothreonine. The stretch at 734–766 (RSKQSKTEREAELRKLQEARERKRLEAKQREDI) forms a coiled coil. Residues 755–775 (RKRLEAKQREDIWEGRDQSVV) form a disordered region.

In terms of assembly, may interact with the exon junction complex (EJC) composed at least of CASC3, EIF4A3, MAGOH and RBM8A.

This is Coiled-coil domain-containing protein R3HCC1L (R3hcc1l) from Mus musculus (Mouse).